We begin with the raw amino-acid sequence, 185 residues long: Ribosome-recycling factor (185 aa).

This sequence belongs to the RRF family.

Its subcellular location is the cytoplasm. In terms of biological role, responsible for the release of ribosomes from messenger RNA at the termination of protein biosynthesis. May increase the efficiency of translation by recycling ribosomes from one round of translation to another. In Salinispora arenicola (strain CNS-205), this protein is Ribosome-recycling factor.